The sequence spans 281 residues: Large ribosomal subunit protein uL2 (281 aa).

Residues 208 to 281 form a disordered region; sequence AGRSRYAGQR…RGRKRGPHTR (74 aa). Residues 254 to 281 are compositionally biased toward basic residues; that stretch reads TVGKKTRSHKARSNKFIVRGRKRGPHTR.

Belongs to the universal ribosomal protein uL2 family. As to quaternary structure, part of the 50S ribosomal subunit. Forms a bridge to the 30S subunit in the 70S ribosome.

Its function is as follows. One of the primary rRNA binding proteins. Required for association of the 30S and 50S subunits to form the 70S ribosome, for tRNA binding and peptide bond formation. It has been suggested to have peptidyltransferase activity; this is somewhat controversial. Makes several contacts with the 16S rRNA in the 70S ribosome. This is Large ribosomal subunit protein uL2 from Limosilactobacillus fermentum (strain NBRC 3956 / LMG 18251) (Lactobacillus fermentum).